We begin with the raw amino-acid sequence, 113 residues long: Small ribosomal subunit protein bS6 (113 aa).

The protein belongs to the bacterial ribosomal protein bS6 family.

Binds together with bS18 to 16S ribosomal RNA. In Buchnera aphidicola subsp. Acyrthosiphon pisum (strain APS) (Acyrthosiphon pisum symbiotic bacterium), this protein is Small ribosomal subunit protein bS6 (rpsF).